The chain runs to 268 residues: Tryptophan synthase alpha chain (268 aa).

Active-site proton acceptor residues include glutamate 49 and aspartate 60.

This sequence belongs to the TrpA family. Tetramer of two alpha and two beta chains.

It catalyses the reaction (1S,2R)-1-C-(indol-3-yl)glycerol 3-phosphate + L-serine = D-glyceraldehyde 3-phosphate + L-tryptophan + H2O. It functions in the pathway amino-acid biosynthesis; L-tryptophan biosynthesis; L-tryptophan from chorismate: step 5/5. Its function is as follows. The alpha subunit is responsible for the aldol cleavage of indoleglycerol phosphate to indole and glyceraldehyde 3-phosphate. The chain is Tryptophan synthase alpha chain from Escherichia coli O6:K15:H31 (strain 536 / UPEC).